A 1045-amino-acid polypeptide reads, in one-letter code: Pre-mRNA-splicing factor ATP-dependent RNA helicase DHX16 (1045 aa).

The segment at 101–211 (EDSEESSEEA…ERSDKKAYEE (111 aa)) is disordered. A phosphoserine mark is found at Ser103, Ser106, and Ser107. The span at 119-131 (QKKRKKRKHLRKK) shows a compositional bias: basic residues. The segment covering 135–144 (EEEEEEEEEV) has biased composition (acidic residues). Position 164 is a phosphoserine (Ser164). The segment covering 170 to 211 (RTERERLQDLEERDAFAERVRQRDKDRTRNVLERSDKKAYEE) has biased composition (basic and acidic residues). A Helicase ATP-binding domain is found at 413–577 (LAAVANHQIL…FDDAPVFRIP (165 aa)). 426-433 (GETGSGKT) provides a ligand contact to ATP. A DEAH box motif is present at residues 524-527 (DEAH). In terms of domain architecture, Helicase C-terminal spans 602-775 (SVLQIHVTQP…NVVLLLKSLG (174 aa)). Thr716 is modified (phosphothreonine). The segment at 1026-1045 (EDPHAKKMPKKTGKTREELG) is disordered.

This sequence belongs to the DEAD box helicase family. DEAH subfamily. DDX16/PRP8 sub-subfamily. In terms of assembly, component of pre-catalytic spliceosome complexes. Component of the minor spliceosome, which splices U12-type introns. Interacts with GPKOW. Interacts with TRIM6. Interacts with RIGI.

The protein resides in the nucleus. It is found in the nucleoplasm. Its subcellular location is the cytoplasm. It catalyses the reaction ATP + H2O = ADP + phosphate + H(+). Functionally, required for pre-mRNA splicing as a component of the spliceosome. Contributes to pre-mRNA splicing after spliceosome formation and prior to the first transesterification reaction. As a component of the minor spliceosome, involved in the splicing of U12-type introns in pre-mRNAs. Also plays a role in innate antiviral response by acting as a pattern recognition receptor sensing splicing signals in viral RNA. Mechanistically, TRIM6 promotes the interaction between unanchored 'Lys-48'-polyubiquitin chains and DHX16, leading to DHX16 interaction with RIGI and ssRNA to amplify RIGI-dependent innate antiviral immune responses. This chain is Pre-mRNA-splicing factor ATP-dependent RNA helicase DHX16 (DHX16), found in Sus scrofa (Pig).